The following is a 370-amino-acid chain: Peptidoglycan glycosyltransferase MrdB (370 aa).

The next 9 membrane-spanning stretches (helical) occupy residues 20–40, 50–70, 75–95, 136–156, 160–180, 183–203, 263–283, 312–332, and 336–356; these read MLLI…SASG, IGQI…PPRV, APYL…FGAI, SLKN…LVAA, LGTS…SGLS, LIGV…FFLM, FIFA…LLAL, LILF…LPVV, and LPLV…FGIV.

It belongs to the SEDS family. MrdB/RodA subfamily.

Its subcellular location is the cell inner membrane. It catalyses the reaction [GlcNAc-(1-&gt;4)-Mur2Ac(oyl-L-Ala-gamma-D-Glu-L-Lys-D-Ala-D-Ala)](n)-di-trans,octa-cis-undecaprenyl diphosphate + beta-D-GlcNAc-(1-&gt;4)-Mur2Ac(oyl-L-Ala-gamma-D-Glu-L-Lys-D-Ala-D-Ala)-di-trans,octa-cis-undecaprenyl diphosphate = [GlcNAc-(1-&gt;4)-Mur2Ac(oyl-L-Ala-gamma-D-Glu-L-Lys-D-Ala-D-Ala)](n+1)-di-trans,octa-cis-undecaprenyl diphosphate + di-trans,octa-cis-undecaprenyl diphosphate + H(+). The protein operates within cell wall biogenesis; peptidoglycan biosynthesis. Its function is as follows. Peptidoglycan polymerase that is essential for cell wall elongation. This is Peptidoglycan glycosyltransferase MrdB from Escherichia coli O157:H7.